The sequence spans 417 residues: Type II methyltransferase M.Eco47II (417 aa).

In terms of domain architecture, SAM-dependent MTase C5-type spans 81–414; the sequence is YTVLELFAGA…KSVVHLLDKI (334 aa). Cys-153 is a catalytic residue.

Belongs to the class I-like SAM-binding methyltransferase superfamily. C5-methyltransferase family.

The catalysed reaction is a 2'-deoxycytidine in DNA + S-adenosyl-L-methionine = a 5-methyl-2'-deoxycytidine in DNA + S-adenosyl-L-homocysteine + H(+). A methylase that recognizes the double-stranded sequence 5'-GGNCC-3', methylates C-? on both strands, and protects the DNA from cleavage by both the Eco47I and Eco47II endonucleases. This chain is Type II methyltransferase M.Eco47II, found in Escherichia coli.